A 123-amino-acid chain; its full sequence is MPAKAQAAGKKGSKKAKAPKPSGDKKRRRKRKESYGIYIYKVLKQVHPDTGISSRAMSIMNSFVNDVFERIAAEASRLAHYNKKSTITSREVQTAVRLLLPGELAKHAVSEGTKAVTKYTTSK.

Residues 1–10 (MPAKAQAAGK) are compositionally biased toward low complexity. The interval 1 to 32 (MPAKAQAAGKKGSKKAKAPKPSGDKKRRRKRK) is disordered. Residue Ser-110 is glycosylated (O-linked (GlcNAc) serine). Lys-118 is covalently cross-linked (Glycyl lysine isopeptide (Lys-Gly) (interchain with G-Cter in ubiquitin)).

Belongs to the histone H2B family. In terms of assembly, the nucleosome is a histone octamer containing two molecules each of H2A, H2B, H3 and H4 assembled in one H3-H4 heterotetramer and two H2A-H2B heterodimers. The octamer wraps approximately 147 bp of DNA. Monoubiquitination of Lys-118 gives a specific tag for epigenetic transcriptional activation and is also prerequisite for histone H3 'Lys-4' and 'Lys-79' methylation. Post-translationally, glcNAcylation at Ser-110 promotes monoubiquitination of Lys-118. It fluctuates in response to extracellular glucose, and associates with transcribed genes.

The protein resides in the nucleus. The protein localises to the chromosome. Its function is as follows. Core component of nucleosome. Nucleosomes wrap and compact DNA into chromatin, limiting DNA accessibility to the cellular machineries which require DNA as a template. Histones thereby play a central role in transcription regulation, DNA repair, DNA replication and chromosomal stability. DNA accessibility is regulated via a complex set of post-translational modifications of histones, also called histone code, and nucleosome remodeling. This chain is Late histone H2B.L3, found in Strongylocentrotus purpuratus (Purple sea urchin).